The following is a 322-amino-acid chain: Aspartate carbamoyltransferase catalytic subunit (322 aa).

R65 and T66 together coordinate carbamoyl phosphate. K93 serves as a coordination point for L-aspartate. Carbamoyl phosphate is bound by residues R115, H143, and Q146. L-aspartate-binding residues include R176 and R230. 2 residues coordinate carbamoyl phosphate: G271 and P272.

The protein belongs to the aspartate/ornithine carbamoyltransferase superfamily. ATCase family. As to quaternary structure, heterododecamer (2C3:3R2) of six catalytic PyrB chains organized as two trimers (C3), and six regulatory PyrI chains organized as three dimers (R2).

It carries out the reaction carbamoyl phosphate + L-aspartate = N-carbamoyl-L-aspartate + phosphate + H(+). The protein operates within pyrimidine metabolism; UMP biosynthesis via de novo pathway; (S)-dihydroorotate from bicarbonate: step 2/3. In terms of biological role, catalyzes the condensation of carbamoyl phosphate and aspartate to form carbamoyl aspartate and inorganic phosphate, the committed step in the de novo pyrimidine nucleotide biosynthesis pathway. This chain is Aspartate carbamoyltransferase catalytic subunit, found in Brucella anthropi (strain ATCC 49188 / DSM 6882 / CCUG 24695 / JCM 21032 / LMG 3331 / NBRC 15819 / NCTC 12168 / Alc 37) (Ochrobactrum anthropi).